We begin with the raw amino-acid sequence, 390 residues long: Succinate--CoA ligase [ADP-forming] subunit beta (390 aa).

Residues 9–248 (KDILRKFGVT…TSEEDPFEVE (240 aa)) form the ATP-grasp domain. ATP contacts are provided by residues lysine 50, 57–59 (GRG), glutamate 103, methionine 106, and glutamate 111. Mg(2+) is bound by residues asparagine 203 and aspartate 217. Substrate contacts are provided by residues asparagine 268 and 325–327 (GIV).

It belongs to the succinate/malate CoA ligase beta subunit family. Heterotetramer of two alpha and two beta subunits. The cofactor is Mg(2+).

It catalyses the reaction succinate + ATP + CoA = succinyl-CoA + ADP + phosphate. The enzyme catalyses GTP + succinate + CoA = succinyl-CoA + GDP + phosphate. It functions in the pathway carbohydrate metabolism; tricarboxylic acid cycle; succinate from succinyl-CoA (ligase route): step 1/1. Its function is as follows. Succinyl-CoA synthetase functions in the citric acid cycle (TCA), coupling the hydrolysis of succinyl-CoA to the synthesis of either ATP or GTP and thus represents the only step of substrate-level phosphorylation in the TCA. The beta subunit provides nucleotide specificity of the enzyme and binds the substrate succinate, while the binding sites for coenzyme A and phosphate are found in the alpha subunit. This chain is Succinate--CoA ligase [ADP-forming] subunit beta, found in Chlorobium chlorochromatii (strain CaD3).